Reading from the N-terminus, the 68-residue chain is uncharacterized protein (68 aa).

This is an uncharacterized protein from Archaeoglobus fulgidus (strain ATCC 49558 / DSM 4304 / JCM 9628 / NBRC 100126 / VC-16).